An 88-amino-acid polypeptide reads, in one-letter code: ATP synthase subunit 9, mitochondrial (88 aa).

Helical transmembrane passes span 30–50 and 66–86; these read IGLT…ILAV and LGFA…FLIL.

Belongs to the ATPase C chain family. F-type ATPases have 2 components, CF(1) - the catalytic core - and CF(0) - the membrane proton channel. CF(1) has five subunits: alpha(3), beta(3), gamma(1), delta(1), epsilon(1). CF(0) has three main subunits: a, b and c.

It localises to the mitochondrion membrane. Functionally, mitochondrial membrane ATP synthase (F(1)F(0) ATP synthase or Complex V) produces ATP from ADP in the presence of a proton gradient across the membrane which is generated by electron transport complexes of the respiratory chain. F-type ATPases consist of two structural domains, F(1) - containing the extramembraneous catalytic core and F(0) - containing the membrane proton channel, linked together by a central stalk and a peripheral stalk. During catalysis, ATP synthesis in the catalytic domain of F(1) is coupled via a rotary mechanism of the central stalk subunits to proton translocation. Part of the complex F(0) domain. A homomeric c-ring of probably 10 subunits is part of the complex rotary element. The chain is ATP synthase subunit 9, mitochondrial (atp9) from Dictyostelium citrinum (Slime mold).